We begin with the raw amino-acid sequence, 1061 residues long: Ribonuclease 3 (1061 aa).

Disordered regions lie at residues 1–20 (MDFTEIHKRSRRKKFQQIHQ) and 149–244 (PLHS…SYNE). Over residues 156–173 (KTPERKENEEDSDSEIRS) the composition is skewed to basic and acidic residues. 2 consecutive RNase III domains span residues 586–759 (LSVF…LDSG) and 811–935 (FHRL…VDKG). Residues glutamate 851, aspartate 921, and glutamate 924 each coordinate Mg(2+). A DRBM domain is found at 962 to 1037 (DAKSHLQQWC…AENALAALEK (76 aa)).

Belongs to the ribonuclease III family. Mg(2+) serves as cofactor. Requires Mn(2+) as cofactor.

It localises to the nucleus. The catalysed reaction is Endonucleolytic cleavage to 5'-phosphomonoester.. Executes the initial step of microRNA (miRNA) processing in the nucleus, that is the cleavage of pri-miRNA to release pre-miRNA. Involved in pre-rRNA processing. Cleaves double-strand RNA and does not cleave single-strand RNA. Involved in fertility. Required for the function or synthesis of the let-7 miRNA. This chain is Ribonuclease 3, found in Caenorhabditis briggsae.